The following is a 308-amino-acid chain: Vomeronasal type-1 receptor 92 (308 aa).

At 1 to 18 (MNKDNTLHTIMKITMFSE) the chain is on the extracellular side. Residues 19-39 (VSVGISANSILFFAHLCMLLG) form a helical membrane-spanning segment. Residues 40-48 (ENRPKPFHL) are Cytoplasmic-facing. Residues 49 to 69 (YIVSLSLTQLILLITMGLIAV) traverse the membrane as a helical segment. Residues 70-91 (DMFMSWGRWDSTPCQSLIYLHR) lie on the Extracellular side of the membrane. An intrachain disulfide couples Cys-83 to Cys-170. Residues 92-112 (LLRGFTLCAACLLNVFWMITL) traverse the membrane as a helical segment. Topologically, residues 113–132 (SPRSSCLSKFKHNSPHHISG) are cytoplasmic. A helical membrane pass occupies residues 133–153 (AFLFLCVLYMSFSSHLLVSII). Residues 154–188 (ATPNLTSNIFMYVTQSCSLLPMSYSRTSTFSTTIA) lie on the Extracellular side of the membrane. Residue Asn-157 is glycosylated (N-linked (GlcNAc...) asparagine). Residues 189–209 (IREAFLISLMALSSGFMVTLL) traverse the membrane as a helical segment. The Cytoplasmic segment spans residues 210-236 (WRHKKQAQHLHSTSLSSKASPERRATR). A helical membrane pass occupies residues 237–257 (TILLLMSFFVVLYILENVVFY). The Extracellular segment spans residues 258-267 (SRMKFKDGSM). Residues 268–288 (FYCVQIIVSHSYATISPFVFI) form a helical membrane-spanning segment. Topologically, residues 289-308 (CTEKHMTKILRSVCTRIINI) are cytoplasmic.

This sequence belongs to the G-protein coupled receptor 1 family.

Its subcellular location is the cell membrane. Functionally, putative pheromone receptor implicated in the regulation of social as well as reproductive behavior. The sequence is that of Vomeronasal type-1 receptor 92 (Vom1r92) from Rattus norvegicus (Rat).